We begin with the raw amino-acid sequence, 1214 residues long: ATP-dependent helicase/nuclease subunit A (1214 aa).

A UvrD-like helicase ATP-binding domain is found at 27 to 483; sequence HKRTAQQIEA…ILLKENFRSQ (457 aa). 48–55 contributes to the ATP binding site; it reads ASAGSGKT. One can recognise a UvrD-like helicase C-terminal domain in the interval 512–800; that stretch reads QLVAGSEAQK…NLMTIHKSKG (289 aa).

This sequence belongs to the helicase family. AddA subfamily. In terms of assembly, heterodimer of AddA and AddB/RexB. It depends on Mg(2+) as a cofactor.

The enzyme catalyses Couples ATP hydrolysis with the unwinding of duplex DNA by translocating in the 3'-5' direction.. It catalyses the reaction ATP + H2O = ADP + phosphate + H(+). The heterodimer acts as both an ATP-dependent DNA helicase and an ATP-dependent, dual-direction single-stranded exonuclease. Recognizes the chi site generating a DNA molecule suitable for the initiation of homologous recombination. The AddA nuclease domain is required for chi fragment generation; this subunit has the helicase and 3' -&gt; 5' nuclease activities. The protein is ATP-dependent helicase/nuclease subunit A of Streptococcus equi subsp. zooepidemicus (strain MGCS10565).